We begin with the raw amino-acid sequence, 531 residues long: Probable inactive beta-glucosidase 25 (531 aa).

The signal sequence occupies residues Met-1–Gly-24. A beta-D-glucoside is bound by residues Gln-53 and Asn-202–Glu-203. Glu-203 functions as the Proton donor in the catalytic mechanism. A disulfide bridge connects residues Cys-222 and Cys-230. A beta-D-glucoside is bound by residues Phe-348 and Glu-477 to Trp-478.

This sequence belongs to the glycosyl hydrolase 1 family.

This Arabidopsis thaliana (Mouse-ear cress) protein is Probable inactive beta-glucosidase 25.